Here is a 153-residue protein sequence, read N- to C-terminus: Endoribonuclease YbeY (153 aa).

Zn(2+) is bound by residues histidine 114, histidine 118, and histidine 124.

This sequence belongs to the endoribonuclease YbeY family. Requires Zn(2+) as cofactor.

It localises to the cytoplasm. Functionally, single strand-specific metallo-endoribonuclease involved in late-stage 70S ribosome quality control and in maturation of the 3' terminus of the 16S rRNA. This is Endoribonuclease YbeY from Shewanella baltica (strain OS185).